Reading from the N-terminus, the 212-residue chain is MTLQYTALGDSLTVGVGAGLFEPGFVQRYKRKMEEDLNEEVSLIVFAKSGLETSEILAMLNEPFIMEQVKKADVITITGCGNDLLQSLEIYEKEKDEHVFLEASSHCQKNYSGMLEKIREIKGEKDTRYLVRLLNLYNPFPSIELADKWISGFNRHLKQLESAPQIKVIDTYAVFKGREKEYLSIDRVHPSSRGYEAMSEKLRAAGYGRLEG.

Catalysis depends on S11, which acts as the Nucleophile. The substrate site is built by G50 and N82. Residues D186 and H189 contribute to the active site.

Belongs to the 'GDSL' lipolytic enzyme family.

It is found in the spore coat. Functionally, lipase involved in spore germination. This is Spore germination lipase LipC (lipC) from Bacillus licheniformis (strain ATCC 14580 / DSM 13 / JCM 2505 / CCUG 7422 / NBRC 12200 / NCIMB 9375 / NCTC 10341 / NRRL NRS-1264 / Gibson 46).